The following is a 302-amino-acid chain: Short-chain dehydrogenase/reductase 3 (302 aa).

Transmembrane regions (helical) follow at residues L9–L29, I170–T190, A195–T215, and A253–L273. S175 serves as a coordination point for substrate. Y188 acts as the Proton acceptor in catalysis.

This sequence belongs to the short-chain dehydrogenases/reductases (SDR) family. As to expression, widely expressed with highest levels found in heart, placenta, lung, liver, kidney, pancreas, thyroid, testis, stomach, trachea and spinal cord. Lower levels found in skeletal muscle, intestine and lymph node. No expression detected in brain. In the retina, expressed in cone but not rod outer segments.

The protein resides in the membrane. The enzyme catalyses all-trans-retinol + NADP(+) = all-trans-retinal + NADPH + H(+). Catalyzes the reduction of all-trans-retinal to all-trans-retinol in the presence of NADPH. This Homo sapiens (Human) protein is Short-chain dehydrogenase/reductase 3 (DHRS3).